Reading from the N-terminus, the 547-residue chain is Delta-guaiene synthase 1 (547 aa).

Positions 299, 303, and 444 each coordinate Mg(2+). A DDXXD motif motif is present at residues 299–303; it reads DDTYD.

This sequence belongs to the terpene synthase family. The cofactor is Mg(2+).

It catalyses the reaction (2E,6E)-farnesyl diphosphate = delta-guaiene + diphosphate. It carries out the reaction (2E,6E)-farnesyl diphosphate = alpha-guaiene + diphosphate. Its pathway is secondary metabolite biosynthesis; terpenoid biosynthesis. Sesquiterpene synthase involved in the biosynthesis of delta-guaiene (81.2%) and alpha-guaiene (18.1%), two structures composed of five- and seven-membered rings. Also produces 0.7% of alpha-humulene. This Aquilaria crassna (Eagle wood) protein is Delta-guaiene synthase 1 (C2).